Consider the following 776-residue polypeptide: Protein SEY1 (776 aa).

Residues 1–681 (MADRPAIQLI…KRSIITTRTH (681 aa)) are Cytoplasmic-facing. One can recognise a GB1/RHD3-type G domain in the interval 34–263 (GLDYHVISVF…TENYYFKPQY (230 aa)). Position 44-51 (44-51 (GSQSSGKS)) interacts with GTP. Residues 682 to 702 (IPPWIYVLLAVLGWNEFVAVI) traverse the membrane as a helical segment. The Lumenal portion of the chain corresponds to 703–705 (RNP). The helical transmembrane segment at 706–726 (LFVTLTLILGATFFVIHKFGL) threads the bilayer. The Cytoplasmic portion of the chain corresponds to 727–776 (WGPVVNVVQSAVGETRTAIKDKLRQFVVEDHEVKESFEMKDFSKNEQKEK).

Belongs to the TRAFAC class dynamin-like GTPase superfamily. GB1/RHD3 GTPase family. RHD3 subfamily. As to quaternary structure, interacts with RTN1 and YOP1; GTP binding is not required for these interactions.

The protein resides in the endoplasmic reticulum membrane. Functionally, cooperates with the reticulon proteins RTN1 and RTN2 and the tubule-shaping DP1 family protein YOP1 to generate and maintain the structure of the tubular endoplasmic reticulum network. Has GTPase activity, which is required for its function in ER organization. This is Protein SEY1 from Saccharomyces cerevisiae (strain ATCC 204508 / S288c) (Baker's yeast).